Consider the following 159-residue polypeptide: uncharacterized protein (159 aa).

Residues 1 to 13 show a composition bias toward basic and acidic residues; the sequence is MESRPSGRQHASE. Residues 1 to 35 form a disordered region; it reads MESRPSGRQHASEGDGDQSPTQCAGMRSSGRSDQP.

This is an uncharacterized protein from Homo sapiens (Human).